The chain runs to 170 residues: Peptide deformylase (170 aa).

Fe cation contacts are provided by C91 and H133. E134 is a catalytic residue. H137 contacts Fe cation.

It belongs to the polypeptide deformylase family. Fe(2+) serves as cofactor.

It carries out the reaction N-terminal N-formyl-L-methionyl-[peptide] + H2O = N-terminal L-methionyl-[peptide] + formate. Functionally, removes the formyl group from the N-terminal Met of newly synthesized proteins. Requires at least a dipeptide for an efficient rate of reaction. N-terminal L-methionine is a prerequisite for activity but the enzyme has broad specificity at other positions. The chain is Peptide deformylase from Pectobacterium carotovorum subsp. carotovorum (strain PC1).